The chain runs to 203 residues: Endo-type membrane-bound lytic murein transglycosylase A (203 aa).

The N-terminal stretch at 1-15 (MKLRWLLILVVFLAG) is a signal peptide. The N-palmitoyl cysteine moiety is linked to residue Cys-16. Residue Cys-16 is the site of S-diacylglycerol cysteine attachment.

Belongs to the transglycosylase Slt family.

The protein resides in the cell outer membrane. The enzyme catalyses Endolytic cleavage of the (1-&gt;4)-beta-glycosidic linkage between N-acetylmuramic acid (MurNAc) and N-acetylglucosamine (GlcNAc) residues in peptidoglycan with concomitant formation of a 1,6-anhydrobond in the MurNAc residue.. Functionally, murein-degrading enzyme. May play a role in recycling of muropeptides during cell elongation and/or cell division. Preferentially cleaves at a distance of more than two disaccharide units from the ends of the glycan chain. This Klebsiella pneumoniae (strain 342) protein is Endo-type membrane-bound lytic murein transglycosylase A.